The primary structure comprises 670 residues: E3 ubiquitin-protein ligase TRAF7 (670 aa).

Disordered stretches follow at residues 1–37 and 49–97; these read MSSGKSARYNRFSGGPSNLPTPDVTTGTRMETTFGPA and GTST…SLHS. Composition is skewed to polar residues over residues 15-31 and 49-67; these read GPSNLPTPDVTTGTRME and GTSTYKQHCRTPSSSSTLA. Phosphoserine occurs at positions 61, 88, and 91. Residues 131-165 form an RING-type zinc finger; it reads CQLCCSVFKDPVITTCGHTFCRRCALKSEKCPVDN. The TRAF-type zinc finger occupies 222-276; sequence HEGSCDYRPVRCPNNPSCPPLLRMNLEAHLKECEHIKCPHSKYGCTFIGNQDTYE. WD repeat units follow at residues 394 to 433, 437 to 474, 477 to 513, 515 to 554, 557 to 594, 597 to 638, and 641 to 669; these read GHQGPVWCLCVYSMGDLLFSGSSDKTIKVWDTCTTYKCQK, GHDGIVLALCIQGCKLYSGSADCTIIVWDIQNLQKVNT, AHDNPVCTLVSSHNVLFSGSLKAIKVWDIVGTELKLK, ELTGLNHWVRALVAAQSYLYSGSYQTIKIWDIRTLDCIHV, TSGGSVYSIAVTNHHIVCGTYENLIHVWDIESKEQVRT, GHVG…CTQT, and RHQGSVTALAVSRGRLFSGAVDSTVKVWT.

This sequence belongs to the WD repeat TRAF7 family. As to quaternary structure, homodimer. Interacts with MAP3K3 and promotes the kinase activity of this enzyme. In terms of processing, phosphorylated by MAP3K3. Ubiquitinates itself upon phosphorylation. As to expression, ubiquitously expressed with high levels in skeletal muscle, heart, colon, spleen, kidney, liver and placenta.

It localises to the cytoplasmic vesicle. The protein resides in the cytoplasm. It is found in the nucleus. It carries out the reaction S-ubiquitinyl-[E2 ubiquitin-conjugating enzyme]-L-cysteine + [acceptor protein]-L-lysine = [E2 ubiquitin-conjugating enzyme]-L-cysteine + N(6)-ubiquitinyl-[acceptor protein]-L-lysine.. It functions in the pathway protein modification; protein ubiquitination. Its function is as follows. E3 ubiquitin and SUMO-protein ligase that plays a role in different biological processes such as innate immunity, inflammation or apoptosis. Potentiates MAP3K3-mediated activation of JUN/AP1 and DDIT3 transcriptional regulators. Negatively regulates MYB transcriptional activity by sequestering it to the cytosol via SUMOylation. Plays a role in the phosphorylation of MAPK1 and/or MAPK3, probably via its interaction with MAP3K3. Negatively regulates RLR-mediated innate immunity by promoting 'Lys-48'-linked ubiquitination of TBK1 through its RING domain to inhibit the cellular antiviral response. Promotes 'Lys-29'-linked polyubiquitination of NEMO/IKBKG and RELA leading to targeting these two proteins to lysosomal degradative pathways, reducing the transcriptional activity of NF-kappa-B. The sequence is that of E3 ubiquitin-protein ligase TRAF7 (TRAF7) from Homo sapiens (Human).